Reading from the N-terminus, the 120-residue chain is Small ribosomal subunit protein uS13 (120 aa).

The tract at residues 94–120 is disordered; that stretch reads GLPLRGQRTRTNARTRKGPRKAIAGKK.

This sequence belongs to the universal ribosomal protein uS13 family. As to quaternary structure, part of the 30S ribosomal subunit. Forms a loose heterodimer with protein S19. Forms two bridges to the 50S subunit in the 70S ribosome.

Its function is as follows. Located at the top of the head of the 30S subunit, it contacts several helices of the 16S rRNA. In the 70S ribosome it contacts the 23S rRNA (bridge B1a) and protein L5 of the 50S subunit (bridge B1b), connecting the 2 subunits; these bridges are implicated in subunit movement. Contacts the tRNAs in the A and P-sites. This is Small ribosomal subunit protein uS13 from Aromatoleum aromaticum (strain DSM 19018 / LMG 30748 / EbN1) (Azoarcus sp. (strain EbN1)).